Here is a 76-residue protein sequence, read N- to C-terminus: MSYIEKLGDNMVKRLKILIDNEFSNLIIEFKRNVKKSFEGEAFVTIGIDENDKISYISIEPLDKDLKEGIKRIKVL.

This is an uncharacterized protein from Sulfolobus islandicus rod-shaped virus 1 (SIRV-1).